The following is a 116-amino-acid chain: Large ribosomal subunit protein bL17 (116 aa).

Belongs to the bacterial ribosomal protein bL17 family. Part of the 50S ribosomal subunit. Contacts protein L32.

This is Large ribosomal subunit protein bL17 from Prochlorococcus marinus (strain MIT 9312).